Here is a 47-residue protein sequence, read N- to C-terminus: Delta-ctenitoxin-Pr2d (47 aa).

Intrachain disulfides connect C3/C17, C10/C23, C14/C46, C16/C31, and C25/C29.

Expressed by the venom gland.

It localises to the secreted. Functionally, blocks voltage-gated sodium channels (Nav). Causes rapid general spastic paralysis and death when injected in mice at dose levels of less than 2 ug per mouse. The polypeptide is Delta-ctenitoxin-Pr2d (Phoneutria reidyi (Brazilian Amazonian armed spider)).